Here is a 331-residue protein sequence, read N- to C-terminus: Phenylalanine--tRNA ligase alpha subunit (331 aa).

Position 252 (Glu-252) interacts with Mg(2+).

This sequence belongs to the class-II aminoacyl-tRNA synthetase family. Phe-tRNA synthetase alpha subunit type 1 subfamily. Tetramer of two alpha and two beta subunits. Requires Mg(2+) as cofactor.

Its subcellular location is the cytoplasm. It carries out the reaction tRNA(Phe) + L-phenylalanine + ATP = L-phenylalanyl-tRNA(Phe) + AMP + diphosphate + H(+). The protein is Phenylalanine--tRNA ligase alpha subunit of Hahella chejuensis (strain KCTC 2396).